Reading from the N-terminus, the 465-residue chain is UDP-N-acetylmuramate--L-alanine ligase (465 aa).

Position 112–118 (112–118 (GTHGKTT)) interacts with ATP.

The protein belongs to the MurCDEF family.

It is found in the cytoplasm. The catalysed reaction is UDP-N-acetyl-alpha-D-muramate + L-alanine + ATP = UDP-N-acetyl-alpha-D-muramoyl-L-alanine + ADP + phosphate + H(+). It functions in the pathway cell wall biogenesis; peptidoglycan biosynthesis. Its function is as follows. Cell wall formation. This is UDP-N-acetylmuramate--L-alanine ligase from Burkholderia pseudomallei (strain 1106a).